The sequence spans 616 residues: Chaperone protein HscA (616 aa).

The protein belongs to the heat shock protein 70 family.

Its function is as follows. Chaperone involved in the maturation of iron-sulfur cluster-containing proteins. Has a low intrinsic ATPase activity which is markedly stimulated by HscB. Involved in the maturation of IscU. The polypeptide is Chaperone protein HscA (Serratia proteamaculans (strain 568)).